The sequence spans 459 residues: Cysteine--tRNA ligase (459 aa).

Residue Cys-28 coordinates Zn(2+). The 'HIGH' region signature appears at 30–40 (VTVYDLCHIGH). The Zn(2+) site is built by Cys-209, His-234, and Glu-238. The 'KMSKS' region motif lies at 266-270 (KMSKS). Lys-269 contacts ATP.

It belongs to the class-I aminoacyl-tRNA synthetase family. In terms of assembly, monomer. The cofactor is Zn(2+).

The protein localises to the cytoplasm. The enzyme catalyses tRNA(Cys) + L-cysteine + ATP = L-cysteinyl-tRNA(Cys) + AMP + diphosphate. In Histophilus somni (strain 129Pt) (Haemophilus somnus), this protein is Cysteine--tRNA ligase.